The primary structure comprises 213 residues: Anti-sigma-W factor RsiW (213 aa).

Residues 1–86 lie on the Cytoplasmic side of the membrane; the sequence is MSCEQHYRTL…TNRFKVWMRR (86 aa). Positions 30, 34, and 37 each coordinate Zn(2+). The chain crosses the membrane as a helical span at residues 87–109; the sequence is YPLAVAAAVFVLLMSTSLFSMWS. Residues 110 to 213 lie on the Extracellular side of the membrane; the sequence is SDGEHVTVTG…ISDEKNSPSS (104 aa).

This sequence belongs to the zinc-associated anti-sigma factor (ZAS) superfamily. Anti-sigma-W factor family. Zn(2+) is required as a cofactor. In terms of processing, is processed by three successive proteolytic events. First, the extracellular region of RsiW is cleaved by PrsW (Site-1 cleavage) in response to cell envelope stresses. Next, it undergoes cleavage at an intramembrane site (Site-2 cleavage) mediated by RasP. This cleavage uncovers a cryptic proteolytic tag with conserved alanine residues in the transmembrane segment, that is recognized mainly by the ClpXP protease, which completely degrades the protein in the cytoplasm and leads to the induction of the sigma-W-controlled genes.

The protein localises to the membrane. Its function is as follows. Is the anti-sigma factor for SigW. The presence of RsiW leads to the inactivation of SigW, and its proteolytic destruction to sigma-W activation. This chain is Anti-sigma-W factor RsiW (rsiW), found in Halalkalibacterium halodurans (strain ATCC BAA-125 / DSM 18197 / FERM 7344 / JCM 9153 / C-125) (Bacillus halodurans).